A 1488-amino-acid chain; its full sequence is Chromosome partition protein MukB (1488 aa).

Residue 34 to 41 (GGNGAGKS) participates in ATP binding. Coiled-coil stretches lie at residues 326–418 (LEAD…QYNQ), 444–472 (LDTFQAKEQEATEKLLSLEQKMSVAQTAH), and 509–602 (RHLA…QRAP). The segment at 666–783 (PGGAEDQRLN…SLPIFGRAAR (118 aa)) is flexible hinge. Coiled-coil stretches lie at residues 835–923 (EAEI…AKLE), 977–1116 (EMLS…AKAG), and 1209–1265 (VEAI…LQSV). The tract at residues 1049–1074 (ADSGAEERARQRRDELHAQLSNNRSR) is disordered. The span at 1051–1065 (SGAEERARQRRDELH) shows a compositional bias: basic and acidic residues.

This sequence belongs to the SMC family. MukB subfamily. As to quaternary structure, homodimerization via its hinge domain. Binds to DNA via its C-terminal region. Interacts, and probably forms a ternary complex, with MukE and MukF via its C-terminal region. The complex formation is stimulated by calcium or magnesium. Interacts with tubulin-related protein FtsZ.

Its subcellular location is the cytoplasm. It is found in the nucleoid. Plays a central role in chromosome condensation, segregation and cell cycle progression. Functions as a homodimer, which is essential for chromosome partition. Involved in negative DNA supercoiling in vivo, and by this means organize and compact chromosomes. May achieve or facilitate chromosome segregation by condensation DNA from both sides of a centrally located replisome during cell division. This is Chromosome partition protein MukB from Salmonella typhi.